The following is a 383-amino-acid chain: UDP-N-acetylglucosamine--N-acetylmuramyl-(pentapeptide) pyrophosphoryl-undecaprenol N-acetylglucosamine transferase (383 aa).

Residues T10 to G12, N124, R165, S190, I245, and Q290 each bind UDP-N-acetyl-alpha-D-glucosamine. The tract at residues P364–S383 is disordered.

Belongs to the glycosyltransferase 28 family. MurG subfamily.

Its subcellular location is the cell inner membrane. It carries out the reaction di-trans,octa-cis-undecaprenyl diphospho-N-acetyl-alpha-D-muramoyl-L-alanyl-D-glutamyl-meso-2,6-diaminopimeloyl-D-alanyl-D-alanine + UDP-N-acetyl-alpha-D-glucosamine = di-trans,octa-cis-undecaprenyl diphospho-[N-acetyl-alpha-D-glucosaminyl-(1-&gt;4)]-N-acetyl-alpha-D-muramoyl-L-alanyl-D-glutamyl-meso-2,6-diaminopimeloyl-D-alanyl-D-alanine + UDP + H(+). Its pathway is cell wall biogenesis; peptidoglycan biosynthesis. Cell wall formation. Catalyzes the transfer of a GlcNAc subunit on undecaprenyl-pyrophosphoryl-MurNAc-pentapeptide (lipid intermediate I) to form undecaprenyl-pyrophosphoryl-MurNAc-(pentapeptide)GlcNAc (lipid intermediate II). This is UDP-N-acetylglucosamine--N-acetylmuramyl-(pentapeptide) pyrophosphoryl-undecaprenol N-acetylglucosamine transferase from Anaeromyxobacter dehalogenans (strain 2CP-C).